The following is a 616-amino-acid chain: Dihydroxy-acid dehydratase (616 aa).

A Mg(2+)-binding site is contributed by aspartate 81. Cysteine 122 provides a ligand contact to [2Fe-2S] cluster. Positions 123 and 124 each coordinate Mg(2+). Lysine 124 is modified (N6-carboxylysine). Cysteine 195 serves as a coordination point for [2Fe-2S] cluster. Glutamate 491 is a Mg(2+) binding site. Serine 517 serves as the catalytic Proton acceptor.

This sequence belongs to the IlvD/Edd family. In terms of assembly, homodimer. Requires [2Fe-2S] cluster as cofactor. The cofactor is Mg(2+).

It catalyses the reaction (2R)-2,3-dihydroxy-3-methylbutanoate = 3-methyl-2-oxobutanoate + H2O. It carries out the reaction (2R,3R)-2,3-dihydroxy-3-methylpentanoate = (S)-3-methyl-2-oxopentanoate + H2O. It participates in amino-acid biosynthesis; L-isoleucine biosynthesis; L-isoleucine from 2-oxobutanoate: step 3/4. The protein operates within amino-acid biosynthesis; L-valine biosynthesis; L-valine from pyruvate: step 3/4. In terms of biological role, functions in the biosynthesis of branched-chain amino acids. Catalyzes the dehydration of (2R,3R)-2,3-dihydroxy-3-methylpentanoate (2,3-dihydroxy-3-methylvalerate) into 2-oxo-3-methylpentanoate (2-oxo-3-methylvalerate) and of (2R)-2,3-dihydroxy-3-methylbutanoate (2,3-dihydroxyisovalerate) into 2-oxo-3-methylbutanoate (2-oxoisovalerate), the penultimate precursor to L-isoleucine and L-valine, respectively. This Erwinia tasmaniensis (strain DSM 17950 / CFBP 7177 / CIP 109463 / NCPPB 4357 / Et1/99) protein is Dihydroxy-acid dehydratase.